A 144-amino-acid polypeptide reads, in one-letter code: Large ribosomal subunit protein uL11 (144 aa).

The protein belongs to the universal ribosomal protein uL11 family. As to quaternary structure, part of the ribosomal stalk of the 50S ribosomal subunit. Interacts with L10 and the large rRNA to form the base of the stalk. L10 forms an elongated spine to which L12 dimers bind in a sequential fashion forming a multimeric L10(L12)X complex. Post-translationally, one or more lysine residues are methylated.

In terms of biological role, forms part of the ribosomal stalk which helps the ribosome interact with GTP-bound translation factors. The chain is Large ribosomal subunit protein uL11 from Streptomyces avermitilis (strain ATCC 31267 / DSM 46492 / JCM 5070 / NBRC 14893 / NCIMB 12804 / NRRL 8165 / MA-4680).